Reading from the N-terminus, the 566-residue chain is Macrophage colony-stimulating factor 1 (566 aa).

The signal sequence occupies residues 1–32 (MTARGAAGRCPSSTWMGSRLLLVCLLVSRSVA). The Extracellular portion of the chain corresponds to 33-508 (EVSEHCSHMI…SSIQDPQTSA (476 aa)). N-linked (GlcNAc...) asparagine glycans are attached at residues Asn106, Asn153, and Asn171. Disordered stretches follow at residues 197-417 (PSSD…KLLP) and 434-484 (GKKS…GAAR). The segment covering 253–265 (PRSTCQTLESTEQ) has biased composition (polar residues). Ser302 carries an O-linked (Xyl...) (chondroitin sulfate) serine glycan. Residues 348–360 (DQQPTNITDTPLT) are compositionally biased toward polar residues. N-linked (GlcNAc...) asparagine glycosylation occurs at Asn353. O-linked (GalNAc...) threonine glycosylation is found at Thr355 and Thr357. The segment covering 377-394 (EKTDGSSTLREDQQEPRS) has biased composition (basic and acidic residues). The span at 400 to 410 (LNPQRVGNSAT) shows a compositional bias: polar residues. A compositionally biased stretch (basic and acidic residues) spans 434–445 (GKKSTRDRRSPA). Residues 509–531 (FVFWVLGIILVLLAVGGLLFYSW) form a helical membrane-spanning segment. Over 532–566 (KRRSHRDPRTLDSSVGRPEGSSLAQDEDRQVELPV) the chain is Cytoplasmic. Residues 538–566 (DPRTLDSSVGRPEGSSLAQDEDRQVELPV) form a disordered region. Over residues 557–566 (DEDRQVELPV) the composition is skewed to basic and acidic residues.

Homodimer or heterodimer; disulfide-linked. Likely to exist in multiple forms: homodimer consisting of 2 identical 150-200 kDa proteoglycan subunits, heterodimer consisting of a 150-200 kDa proteoglycan subunit and a truncated 43 kDa subunit, and a homodimer consisting of 2 identical 43 kDa subunits. Interacts with CSF1R. Post-translationally, N-glycosylated. O-glycosylated; contains chondroitin sulfate.

The protein resides in the cell membrane. The protein localises to the secreted. It is found in the extracellular space. Cytokine that plays an essential role in the regulation of survival, proliferation and differentiation of hematopoietic precursor cells, especially mononuclear phagocytes, such as macrophages and monocytes. Promotes the release of pro-inflammatory chemokines, and thereby plays an important role in innate immunity and in inflammatory processes. Plays an important role in the regulation of osteoclast proliferation and differentiation, the regulation of bone resorption, and is required for normal bone development. Required for normal male and female fertility. Promotes reorganization of the actin cytoskeleton, regulates formation of membrane ruffles, cell adhesion and cell migration. Plays a role in lipoprotein clearance. The protein is Macrophage colony-stimulating factor 1 (Csf1) of Rattus norvegicus (Rat).